The chain runs to 199 residues: uncharacterized protein (199 aa).

A helical transmembrane segment spans residues 7–27 (FWFWLILGIIALFIIVKAIVI).

Belongs to the band 7/mec-2 family.

It localises to the membrane. This is an uncharacterized protein from Methanocaldococcus jannaschii (strain ATCC 43067 / DSM 2661 / JAL-1 / JCM 10045 / NBRC 100440) (Methanococcus jannaschii).